The sequence spans 351 residues: Heat-inducible transcription repressor HrcA (351 aa).

Belongs to the HrcA family.

Its function is as follows. Negative regulator of class I heat shock genes (grpE-dnaK-dnaJ and groELS operons). Prevents heat-shock induction of these operons. The polypeptide is Heat-inducible transcription repressor HrcA (Fusobacterium nucleatum subsp. nucleatum (strain ATCC 25586 / DSM 15643 / BCRC 10681 / CIP 101130 / JCM 8532 / KCTC 2640 / LMG 13131 / VPI 4355)).